The sequence spans 451 residues: Probable metal transport system membrane protein CT_069 (451 aa).

The next 8 helical transmembrane spans lie at 14–34 (SFLAVSLICMTTALWGTILLV), 38–58 (PLLSESLSHACYPGLLIGALL), 70–90 (WVIIFFGCLASVLGCLGISFL), 100–120 (SALCLVLVSFFGVGVILVSYV), 145–165 (TEAKLALIIFCLSAVVLWWWY), 192–212 (VLVFISLVIVSGVRSVGILLI), 233–253 (ILILSSIFGGICGALGCYFSV), and 269–289 (ILPTGPLVVFFAGVLVFLCLI). Positions 432 to 451 (PDYDPHQREIPKRTRKSDGC) are disordered. Basic and acidic residues predominate over residues 434–451 (YDPHQREIPKRTRKSDGC).

Belongs to the ABC-3 integral membrane protein family.

It is found in the cell inner membrane. Its function is as follows. Part of an ATP-driven transport system CT_067/CT_068/CT_069/CT_070 for a metal. The polypeptide is Probable metal transport system membrane protein CT_069 (Chlamydia trachomatis serovar D (strain ATCC VR-885 / DSM 19411 / UW-3/Cx)).